Consider the following 1749-residue polypeptide: Kinesin-like protein KIF13A (1749 aa).

Residues 5 to 352 enclose the Kinesin motor domain; sequence KVKVAVRVRP…LRYADRAKRI (348 aa). ATP is bound at residue 102–109; the sequence is GQTGSGKS. Residues 359 to 431 are a coiled coil; that stretch reads NEDPNAKVIR…QERQRQLESM (73 aa). An FHA domain is found at 469–519; the sequence is HTRVGADTSQDIQLFGIGIQPEHCEIDIAADGDITLTPKENARSCVNGTLV. Residues 552-775 adopt a coiled-coil conformation; the sequence is LKDFERETSS…VPEAKRLYGK (224 aa). Disordered stretches follow at residues 633–652 and 834–853; these read QQLS…LAYS and IPER…SGSL. The residue at position 636 (Ser-636) is a Phosphoserine. Positions 1086–1126 form a coiled coil; sequence SDALIKRREYLDEQIKKVSNKKEKTEDDMEREARLVEQWVG. Ser-1274 is modified (phosphoserine). The span at 1370–1383 shows a compositional bias: polar residues; sequence LSTPNVHNVSSSRP. 2 disordered regions span residues 1370-1402 and 1417-1436; these read LSTP…QLDV and TLPR…ENPH. Over residues 1421-1430 the composition is skewed to basic and acidic residues; sequence DSPRRSKEGC. Phosphoserine occurs at positions 1441, 1477, 1481, 1524, 1600, and 1650. Residues 1475 to 1499 adopt a coiled-coil conformation; sequence LLSQEDSEEEENELEALSRKLMLTQ. 2 disordered regions span residues 1584 to 1665 and 1698 to 1749; these read CAEP…GHQA and DFDG…TATR. Residues 1719–1741 show a composition bias toward basic and acidic residues; that stretch reads ETDHKGIPERPPDADRLHPKIEN.

The protein belongs to the TRAFAC class myosin-kinesin ATPase superfamily. Kinesin family. In terms of assembly, interacts with AP1G1 and AP1G2. Interacts with ZFYVE26. Interacts with AP2B1.

The protein localises to the golgi apparatus membrane. It localises to the cytoplasm. The protein resides in the cytoskeleton. It is found in the microtubule organizing center. Its subcellular location is the centrosome. The protein localises to the midbody. It localises to the endosome membrane. Its function is as follows. Plus end-directed microtubule-dependent motor protein involved in intracellular transport and regulating various processes such as mannose-6-phosphate receptor (M6PR) transport to the plasma membrane, endosomal sorting during melanosome biogenesis and cytokinesis. During melanosome maturation, required for delivering melanogenic enzymes from recycling endosomes to nascent melanosomes by creating peripheral recycling endosomal subdomains in melanocytes. Also required for the abscission step in cytokinesis: mediates translocation of ZFYVE26, and possibly TTC19, to the midbody during cytokinesis. Mediates the transport of M6PR-containing vesicles from trans-Golgi network to the plasma membrane via direct interaction with the AP-1 complex. In Mus musculus (Mouse), this protein is Kinesin-like protein KIF13A (Kif13a).